The sequence spans 80 residues: U-actitoxin-Avd9a (80 aa).

The signal sequence occupies residues 1–20; sequence MNLKVLAVFVLCAILVVVTA. A propeptide spanning residues 21–39 is cleaved from the precursor; that stretch reads ERRGTETGVYKKDTLQDLI. One can recognise a ShKT domain in the interval 45 to 80; that stretch reads CIDRFPTGTCKQVKKGGSCKNSDKYRMNCRKTCGLC. Intrachain disulfides connect C45-C80, C54-C73, and C63-C77. Residues 68 to 69 are crucial for binding to potassium channels; that stretch reads KY.

The protein belongs to the sea anemone type 1 potassium channel toxin family. Type 1b subfamily.

It localises to the secreted. Its subcellular location is the nematocyst. In terms of biological role, inhibits voltage-gated potassium channels (Kv1/KCNA). The protein is U-actitoxin-Avd9a of Anemonia viridis (Snakelocks anemone).